The primary structure comprises 451 residues: Chromosomal replication initiator protein DnaA (451 aa).

Positions 1–77 are domain I, interacts with DnaA modulators; it reads MTENEQIFWN…EVYNAQISVD (77 aa). Positions 77 to 110 are domain II; the sequence is DYVFEEDLMIEQNQTKINQKPKQQALNSLPTVTS. Residues 111–329 form a domain III, AAA+ region region; the sequence is DLNSKYSFEN…GALKDISLVA (219 aa). Gly-155, Gly-157, Lys-158, and Thr-159 together coordinate ATP. A domain IV, binds dsDNA region spans residues 330–451; the sequence is NFKQIDTITV…EIETIKNKIK (122 aa).

This sequence belongs to the DnaA family. In terms of assembly, oligomerizes as a right-handed, spiral filament on DNA at oriC.

It is found in the cytoplasm. In terms of biological role, plays an essential role in the initiation and regulation of chromosomal replication. ATP-DnaA binds to the origin of replication (oriC) to initiate formation of the DNA replication initiation complex once per cell cycle. Binds the DnaA box (a 9 base pair repeat at the origin) and separates the double-stranded (ds)DNA. Forms a right-handed helical filament on oriC DNA; dsDNA binds to the exterior of the filament while single-stranded (ss)DNA is stabiized in the filament's interior. The ATP-DnaA-oriC complex binds and stabilizes one strand of the AT-rich DNA unwinding element (DUE), permitting loading of DNA polymerase. After initiation quickly degrades to an ADP-DnaA complex that is not apt for DNA replication. Binds acidic phospholipids. Its function is as follows. The half-life of ATP-DnaA is 12 minutes at 37 degrees Celsius, in E.coli the half-life is about 41 minutes. The sequence is that of Chromosomal replication initiator protein DnaA from Streptococcus pyogenes serotype M1.